The following is a 167-amino-acid chain: Signal peptidase complex subunit 3A (167 aa).

The Cytoplasmic segment spans residues 1–11; it reads MHTFGYRANAL. The helical; Signal-anchor for type II membrane protein transmembrane segment at 12-32 threads the bilayer; it reads LTFAVTALAFICAIASFSDKF. The Lumenal segment spans residues 33 to 167; the sequence is SNQNPSAEIQ…PGYSLPDAYR (135 aa). A glycan (N-linked (GlcNAc...) asparagine) is linked at N136.

It belongs to the SPCS3 family. In terms of assembly, component of the signal peptidase complex (SPC) composed of a catalytic subunit SEC11 and three accessory subunits SPCS1, SPCS2 and SPCS3. The complex induces a local thinning of the ER membrane which is used to measure the length of the signal peptide (SP) h-region of protein substrates. This ensures the selectivity of the complex towards h-regions shorter than 18-20 amino acids.

The protein resides in the endoplasmic reticulum membrane. Functionally, essential component of the signal peptidase complex (SPC) which catalyzes the cleavage of N-terminal signal sequences from nascent proteins as they are translocated into the lumen of the endoplasmic reticulum. Essential for the SPC catalytic activity, possibly by stabilizing and positioning the active center of the complex close to the lumenal surface. This Arabidopsis thaliana (Mouse-ear cress) protein is Signal peptidase complex subunit 3A.